Consider the following 516-residue polypeptide: D-alanine--D-alanyl carrier protein ligase (516 aa).

Position 156–157 (156–157) interacts with ATP; it reads TS. Asp203 provides a ligand contact to D-alanine. Position 298-303 (298-303) interacts with ATP; the sequence is NAYGPT. Residue Val307 participates in D-alanine binding. ATP-binding positions include Asp389, 401–404, and Lys503; that span reads YGGR. Lys503 contacts D-alanine.

The protein belongs to the ATP-dependent AMP-binding enzyme family. DltA subfamily.

It is found in the cytoplasm. The enzyme catalyses holo-[D-alanyl-carrier protein] + D-alanine + ATP = D-alanyl-[D-alanyl-carrier protein] + AMP + diphosphate. The protein operates within cell wall biogenesis; lipoteichoic acid biosynthesis. Catalyzes the first step in the D-alanylation of lipoteichoic acid (LTA), the activation of D-alanine and its transfer onto the D-alanyl carrier protein (Dcp) DltC. In an ATP-dependent two-step reaction, forms a high energy D-alanyl-AMP intermediate, followed by transfer of the D-alanyl residue as a thiol ester to the phosphopantheinyl prosthetic group of the Dcp. D-alanylation of LTA plays an important role in modulating the properties of the cell wall in Gram-positive bacteria, influencing the net charge of the cell wall. The sequence is that of D-alanine--D-alanyl carrier protein ligase from Streptococcus pneumoniae serotype 4 (strain ATCC BAA-334 / TIGR4).